The chain runs to 234 residues: Proteasome subunit alpha type-6 (234 aa).

Serine 14 is subject to Phosphoserine. Lysine 191 is covalently cross-linked (Glycyl lysine isopeptide (Lys-Gly) (interchain with G-Cter in ubiquitin)).

This sequence belongs to the peptidase T1A family. As to quaternary structure, the 26S proteasome consists of a 20S proteasome core and two 19S regulatory subunits. The 20S proteasome core is composed of 28 subunits that are arranged in four stacked rings, resulting in a barrel-shaped structure. The two end rings are each formed by seven alpha subunits, and the two central rings are each formed by seven beta subunits. The catalytic chamber with the active sites is on the inside of the barrel.

The protein localises to the cytoplasm. Its subcellular location is the nucleus. Functionally, the proteasome degrades poly-ubiquitinated proteins in the cytoplasm and in the nucleus. It is essential for the regulated turnover of proteins and for the removal of misfolded proteins. The proteasome is a multicatalytic proteinase complex that is characterized by its ability to cleave peptides with Arg, Phe, Tyr, Leu, and Glu adjacent to the leaving group at neutral or slightly basic pH. It has an ATP-dependent proteolytic activity. In Saccharomyces cerevisiae (strain ATCC 204508 / S288c) (Baker's yeast), this protein is Proteasome subunit alpha type-6 (PRE5).